Here is a 57-residue protein sequence, read N- to C-terminus: Exactin (57 aa).

Disulfide bonds link Cys3–Cys19, Cys12–Cys37, Cys41–Cys49, and Cys50–Cys55.

It belongs to the three-finger toxin family. Short-chain subfamily. Orphan group XX sub-subfamily. Expressed by the venom gland.

Its subcellular location is the secreted. Functionally, anticoagulant protein that prevents the activation of factor X (F10). It acts by potently inhibiting the extrinsic tenase complex (ETC) (IC(50)=116.49 nM), a complex composed by active factor VII (F7a), tissue factor (TF) and F10. In addition, it shows weaker activities on other complexes. It weakly inhibits F10 activation by inhibiting the intrinsic tenase complex (IC(50)=4.05 uM), a complex composed by active factor IX (IXa, F9a), its cofactor factor VIII (VIIIa, F8a), and their substrate F10. It also weakly prevents prothrombin activation by inhibiting the prothrombinase complex (IC(50)=17.66 uM). It shows high kinetic constant towards F7a/TF/F10/phospholipids complex (Ki=30.62 nM) and lower kinetic constant towards F7a/TF/phospholipids complex (Ki=153.75 nM). This is Exactin from Hemachatus haemachatus (Rinkhals).